The following is a 657-amino-acid chain: tRNA 5-methylaminomethyl-2-thiouridine biosynthesis bifunctional protein MnmC (657 aa).

The interval 1-239 (MTDRIVPATL…KRAMLVGEFA (239 aa)) is tRNA (mnm(5)s(2)U34)-methyltransferase. Positions 263-657 (IGAGLAGCAV…VRALRHGRVA (395 aa)) are FAD-dependent cmnm(5)s(2)U34 oxidoreductase.

The protein in the N-terminal section; belongs to the methyltransferase superfamily. tRNA (mnm(5)s(2)U34)-methyltransferase family. It in the C-terminal section; belongs to the DAO family. FAD serves as cofactor.

The protein resides in the cytoplasm. It catalyses the reaction 5-aminomethyl-2-thiouridine(34) in tRNA + S-adenosyl-L-methionine = 5-methylaminomethyl-2-thiouridine(34) in tRNA + S-adenosyl-L-homocysteine + H(+). In terms of biological role, catalyzes the last two steps in the biosynthesis of 5-methylaminomethyl-2-thiouridine (mnm(5)s(2)U) at the wobble position (U34) in tRNA. Catalyzes the FAD-dependent demodification of cmnm(5)s(2)U34 to nm(5)s(2)U34, followed by the transfer of a methyl group from S-adenosyl-L-methionine to nm(5)s(2)U34, to form mnm(5)s(2)U34. This is tRNA 5-methylaminomethyl-2-thiouridine biosynthesis bifunctional protein MnmC from Burkholderia pseudomallei (strain 668).